We begin with the raw amino-acid sequence, 521 residues long: Bifunctional purine biosynthesis protein PurH (521 aa).

The 150-residue stretch at 1–150 (MSEDRKAIKR…KNHPSVAVVT (150 aa)) folds into the MGS-like domain.

Belongs to the PurH family.

The catalysed reaction is (6R)-10-formyltetrahydrofolate + 5-amino-1-(5-phospho-beta-D-ribosyl)imidazole-4-carboxamide = 5-formamido-1-(5-phospho-D-ribosyl)imidazole-4-carboxamide + (6S)-5,6,7,8-tetrahydrofolate. It catalyses the reaction IMP + H2O = 5-formamido-1-(5-phospho-D-ribosyl)imidazole-4-carboxamide. It participates in purine metabolism; IMP biosynthesis via de novo pathway; 5-formamido-1-(5-phospho-D-ribosyl)imidazole-4-carboxamide from 5-amino-1-(5-phospho-D-ribosyl)imidazole-4-carboxamide (10-formyl THF route): step 1/1. It functions in the pathway purine metabolism; IMP biosynthesis via de novo pathway; IMP from 5-formamido-1-(5-phospho-D-ribosyl)imidazole-4-carboxamide: step 1/1. The chain is Bifunctional purine biosynthesis protein PurH from Corynebacterium efficiens (strain DSM 44549 / YS-314 / AJ 12310 / JCM 11189 / NBRC 100395).